A 249-amino-acid chain; its full sequence is 5'-nucleotidase SurE (249 aa).

Residues Asp-9, Asp-10, Ser-40, and Asn-92 each contribute to the a divalent metal cation site.

Belongs to the SurE nucleotidase family. The cofactor is a divalent metal cation.

It is found in the cytoplasm. The enzyme catalyses a ribonucleoside 5'-phosphate + H2O = a ribonucleoside + phosphate. In terms of biological role, nucleotidase that shows phosphatase activity on nucleoside 5'-monophosphates. This Shewanella sp. (strain ANA-3) protein is 5'-nucleotidase SurE.